A 229-amino-acid polypeptide reads, in one-letter code: Urease accessory protein UreF (229 aa).

It belongs to the UreF family. As to quaternary structure, ureD, UreF and UreG form a complex that acts as a GTP-hydrolysis-dependent molecular chaperone, activating the urease apoprotein by helping to assemble the nickel containing metallocenter of UreC. The UreE protein probably delivers the nickel.

The protein localises to the cytoplasm. Functionally, required for maturation of urease via the functional incorporation of the urease nickel metallocenter. The chain is Urease accessory protein UreF from Nostoc sp. (strain PCC 7120 / SAG 25.82 / UTEX 2576).